A 308-amino-acid polypeptide reads, in one-letter code: MWKRWLALALALVAVAWVRAEEELRSKSKICANVFCGAGRECAVTEKGEPTCLCIEQCKPHKRPVCGSNGKTYLNHCELHRDACLTGSKIQVDYDGHCKEKKSISPSASPVVCYQSNRDELRRRIIQWLEAEIIPDGWFSKGSNYSEILDKYFKNFDNGDSRLDSSEFLKFVEQNETAINITTYPDQENNKLLRGLCVDALIELSDENADWKLSFQEFLKCLNPSFNPPEKKCALEDETYADGAETEVDCNRCVCACGNWVCTAMTCDGKNQKGAQTQTEEEMTRYVQELQKHQETAEKTKRVSTKEI.

Residues 1-20 (MWKRWLALALALVAVAWVRA) form the signal peptide. The region spanning 30–53 (ICANVFCGAGRECAVTEKGEPTCL) is the Follistatin-like domain. Cystine bridges form between cysteine 31–cysteine 42, cysteine 36–cysteine 52, cysteine 54–cysteine 84, cysteine 58–cysteine 77, and cysteine 66–cysteine 98. Positions 48 to 100 (GEPTCLCIEQCKPHKRPVCGSNGKTYLNHCELHRDACLTGSKIQVDYDGHCKE) constitute a Kazal-like domain. Residue asparagine 144 is glycosylated (N-linked (GlcNAc...) asparagine). The EF-hand 1 domain occupies 144 to 178 (NYSEILDKYFKNFDNGDSRLDSSEFLKFVEQNETA). Position 165 is a phosphoserine (serine 165). Asparagine 175 and asparagine 180 each carry an N-linked (GlcNAc...) asparagine glycan. Residues 193–228 (LRGLCVDALIELSDENADWKLSFQEFLKCLNPSFNP) enclose the EF-hand 2 domain. The VWFC domain maps to 233-287 (CALEDETYADGAETEVDCNRCVCACGNWVCTAMTCDGKNQKGAQTQTEEEMTRYV).

In terms of assembly, homodimer. Interacts with SCN10A. Interacts with DIP2A; DIP2A may act as a cell surface receptor for FSTL1. Interacts with BMP4. Interacts with CD14; this interaction promotes TL4-mediated signaling cascade.

The protein resides in the secreted. Functionally, secreted glycoprotein that is involved in various physiological processes, such as angiogenesis, regulation of the immune response, cell proliferation and differentiation. Plays a role in the development of the central nervous system, skeletal system, lungs, and ureter. Promotes endothelial cell survival, migration and differentiation into network structures in an AKT-dependent manner. Also promotes survival of cardiac myocytes. Initiates various signaling cascades by activating different receptors on the cell surface such as DIP2A, TLR4 or BMP receptors. This is Follistatin-related protein 1 (FSTL1) from Macaca fascicularis (Crab-eating macaque).